We begin with the raw amino-acid sequence, 300 residues long: Coatomer subunit epsilon (300 aa).

Belongs to the COPE family. Oligomeric complex that consists of at least the alpha, beta, beta', gamma, delta, epsilon and zeta subunits.

The protein localises to the cytoplasm. It localises to the golgi apparatus membrane. It is found in the cytoplasmic vesicle. Its subcellular location is the COPI-coated vesicle membrane. The coatomer is a cytosolic protein complex that binds to dilysine motifs and reversibly associates with Golgi non-clathrin-coated vesicles, which further mediate biosynthetic protein transport from the ER, via the Golgi up to the trans Golgi network. The coatomer complex is required for budding from Golgi membranes, and is essential for the retrograde Golgi-to-ER transport of dilysine-tagged proteins. The polypeptide is Coatomer subunit epsilon (cope) (Dictyostelium discoideum (Social amoeba)).